Here is a 269-residue protein sequence, read N- to C-terminus: UPF0162 protein BU173 (269 aa).

Belongs to the UPF0162 family.

This is UPF0162 protein BU173 from Buchnera aphidicola subsp. Acyrthosiphon pisum (strain APS) (Acyrthosiphon pisum symbiotic bacterium).